The following is an 879-amino-acid chain: Paramyosin, long form (879 aa).

The tract at residues M1–I31 is nonhelical region. S18 is modified (phosphoserine). Residues Q32–V858 are a coiled coil. The interval T859 to E879 is nonhelical region.

Belongs to the paramyosin family. As to quaternary structure, heterodimer of two isoforms. The more-acidic and less-abundant isoform is phosphorylated. Expressed in all larval and adult muscle tissues. Expression is five times higher in tubular than in fibrillar muscles.

It localises to the cytoplasm. The protein resides in the myofibril. In terms of biological role, paramyosin is a major structural component of many thick filaments isolated from invertebrate muscles. The polypeptide is Paramyosin, long form (Prm) (Drosophila melanogaster (Fruit fly)).